We begin with the raw amino-acid sequence, 340 residues long: Ribosomal RNA large subunit methyltransferase F (340 aa).

The interval M1–R36 is disordered.

It belongs to the methyltransferase superfamily. METTL16/RlmF family.

Its subcellular location is the cytoplasm. It catalyses the reaction adenosine(1618) in 23S rRNA + S-adenosyl-L-methionine = N(6)-methyladenosine(1618) in 23S rRNA + S-adenosyl-L-homocysteine + H(+). Functionally, specifically methylates the adenine in position 1618 of 23S rRNA. In Pseudomonas fluorescens (strain Pf0-1), this protein is Ribosomal RNA large subunit methyltransferase F.